A 518-amino-acid polypeptide reads, in one-letter code: Putative BTB/POZ domain and WD-repeat protein R731 (518 aa).

One can recognise a BTB domain in the interval 22–92; that stretch reads TDCQLHLTDS…FYGFPLEEPN (71 aa). The tract at residues 224–246 is disordered; that stretch reads NHEESSDDEVNDDEDTDNEDTDD. Residues 228–246 show a composition bias toward acidic residues; sequence SSDDEVNDDEDTDNEDTDD. WD repeat units lie at residues 391-430 and 437-475; these read NHST…SLIK and FLKF…IIQN.

The protein belongs to the mimivirus BTB/WD family.

The chain is Putative BTB/POZ domain and WD-repeat protein R731 from Acanthamoeba polyphaga (Amoeba).